Here is a 396-residue protein sequence, read N- to C-terminus: Protein TOC75-4, chloroplastic (396 aa).

Over 1–23 (MEAVKEAVRKIKSLVIPHADEKD) the chain is Chloroplast intermembrane. A beta stranded membrane pass occupies residues 24-32 (NGIVFEIKL). Residues 33–87 (NETDQRVEKWGLDPSLDFFEVTGNCNLGRPNSEGSNQSLMGSVTIRNIFNPKLDD) lie on the Cytoplasmic side of the membrane. A beta stranded transmembrane segment spans residues 88 to 96 (LLSKIEYVR). Residues 97–140 (FLEAVKKPRNRTFKTSFFNSRKLSPVFTGGPGYEDLVPPMFVGR) are Chloroplast intermembrane-facing. Residues 141-148 (DCLKATIT) form a beta stranded membrane-spanning segment. Residues 149-156 (ENLTRQRE) are Cytoplasmic-facing. The beta stranded transmembrane segment at 157-164 (LTYGVMFE) threads the bilayer. Topologically, residues 165–271 (EIITRDENRR…VEEGSDKPQP (107 aa)) are chloroplast intermembrane. Residues 272-280 (PVLVLHGRY) form a beta stranded membrane-spanning segment. Topologically, residues 281 to 292 (GGCIGDLPSYDV) are cytoplasmic. Residues 293–301 (FALGGPNSV) traverse the membrane as a beta stranded segment. Over 302–363 (RGYSMGELGA…LYRKMGHGSS (62 aa)) the chain is Chloroplast intermembrane. A beta stranded transmembrane segment spans residues 364-370 (YGLGVKL). Residues 371–384 (GMVRAEYTVRHNRG) lie on the Cytoplasmic side of the membrane. The beta stranded transmembrane segment at 385–392 (TGALFLRF) threads the bilayer. Residues 393-396 (GERY) lie on the Chloroplast intermembrane side of the membrane.

This sequence belongs to the TOC75 family. In terms of assembly, part of the TOC core complex that includes a protein for the specific recognition of transit peptides surrounded by a ring composed of four proteins forming translocation channels, and four to five GTP-binding proteins providing energy. This core complex can interact with components of the TIC complex to form a larger import complex. Chloroplastic protein precursors also interacts with these complexes. In terms of tissue distribution, expressed ubiquitously at low levels.

Its subcellular location is the plastid. It is found in the chloroplast outer membrane. In terms of biological role, mediates the insertion of proteins targeted to the outer membrane of chloroplasts. Required for the import of protein precursors into chloroplasts. Forms the voltage-dependent preprotein translocation channels (hydrophilic beta barrel) of the TOC complex in the chloroplastic outer membrane. Required for etioplast formation and/or etioplast-chloroplast transition during deetiolation. The protein is Protein TOC75-4, chloroplastic (TOC75-4) of Arabidopsis thaliana (Mouse-ear cress).